The following is a 258-amino-acid chain: E3 ubiquitin ligase TRIM40 (258 aa).

An RING-type zinc finger spans residues 14-56 (CPICQESLKEAVSTNCGHLFCRVCLTQHVEKASASGVFCCPLC). The segment at 66–107 (GTGYICPNHQKRVCRFCEESRLLLCVECLVSPEHMSHHELTI) adopts a B box-type zinc-finger fold. Zn(2+) contacts are provided by C71, H74, C93, and H99. Residues 107–159 (IENALSHYKERLNRRSRKLRKDIAELQRLKAQQEKKLQALQFQVDHGNHRLEA) are a coiled coil.

Belongs to the TRIM/RBCC family. As to quaternary structure, interacts with NEDD8. As to expression, highly expressed in normal gastrointestinal epithelia but that is down-regulated in gastrointestinal carcinomas and chronic inflammatory lesions of the gastrointestinal tract.

It carries out the reaction S-ubiquitinyl-[E2 ubiquitin-conjugating enzyme]-L-cysteine + [acceptor protein]-L-lysine = [E2 ubiquitin-conjugating enzyme]-L-cysteine + N(6)-ubiquitinyl-[acceptor protein]-L-lysine.. Functionally, E3 ubiquitin-protein ligase that plays a role in the limitation of the innate immune response. Mediates inhibition of the RLR signaling pathway by ubiquitinating RIGI and IFIH1 receptors, leading to their proteasomal degradation. Also promotes the neddylation of IKBKG/NEMO, stabilizing NFKBIA, and thereby inhibiting of NF-kappa-B nuclear translocation and activation. The polypeptide is E3 ubiquitin ligase TRIM40 (TRIM40) (Homo sapiens (Human)).